Consider the following 588-residue polypeptide: Adenine deaminase (588 aa).

It belongs to the metallo-dependent hydrolases superfamily. Adenine deaminase family. As to quaternary structure, homodimer. Mn(2+) serves as cofactor.

The catalysed reaction is adenine + H2O + H(+) = hypoxanthine + NH4(+). The chain is Adenine deaminase from Escherichia coli (strain SE11).